The primary structure comprises 75 residues: Small ribosomal subunit protein bS18 (75 aa).

Belongs to the bacterial ribosomal protein bS18 family. As to quaternary structure, part of the 30S ribosomal subunit. Forms a tight heterodimer with protein bS6.

Binds as a heterodimer with protein bS6 to the central domain of the 16S rRNA, where it helps stabilize the platform of the 30S subunit. The protein is Small ribosomal subunit protein bS18 of Baumannia cicadellinicola subsp. Homalodisca coagulata.